The chain runs to 208 residues: MFKKPIIIGVTGGSGGGKTSVSRAILDSFPNARIAMIQHDSYYKDQSHMSFEERVKTNYDHPLAFDTDFMIQQLKELLAGRPVDIPIYDYKKHTRSNTTFRQDPQDVIIVEGILVLEDERLRDLMDIKLFVDTDDDIRIIRRIKRDMMERGRSLESIIDQYTSVVKPMYHQFIEPSKRYADIVIPEGVSNVVAIDVINSKIASILGEV.

Position 12 to 19 (12 to 19 (GGSGGGKT)) interacts with ATP.

It belongs to the uridine kinase family.

It is found in the cytoplasm. The catalysed reaction is uridine + ATP = UMP + ADP + H(+). It catalyses the reaction cytidine + ATP = CMP + ADP + H(+). It participates in pyrimidine metabolism; CTP biosynthesis via salvage pathway; CTP from cytidine: step 1/3. The protein operates within pyrimidine metabolism; UMP biosynthesis via salvage pathway; UMP from uridine: step 1/1. The sequence is that of Uridine kinase from Streptococcus pyogenes serotype M18 (strain MGAS8232).